Consider the following 82-residue polypeptide: uncharacterized protein (82 aa).

This is an uncharacterized protein from Autographa californica nuclear polyhedrosis virus (AcMNPV).